We begin with the raw amino-acid sequence, 275 residues long: 2,3,4,5-tetrahydropyridine-2,6-dicarboxylate N-succinyltransferase (275 aa).

The substrate site is built by Arg-104 and Asp-141.

The protein belongs to the transferase hexapeptide repeat family. In terms of assembly, homotrimer.

It localises to the cytoplasm. It carries out the reaction (S)-2,3,4,5-tetrahydrodipicolinate + succinyl-CoA + H2O = (S)-2-succinylamino-6-oxoheptanedioate + CoA. It participates in amino-acid biosynthesis; L-lysine biosynthesis via DAP pathway; LL-2,6-diaminopimelate from (S)-tetrahydrodipicolinate (succinylase route): step 1/3. The chain is 2,3,4,5-tetrahydropyridine-2,6-dicarboxylate N-succinyltransferase from Aeromonas salmonicida (strain A449).